The primary structure comprises 302 residues: Glycine--tRNA ligase alpha subunit (302 aa).

It belongs to the class-II aminoacyl-tRNA synthetase family. Tetramer of two alpha and two beta subunits.

The protein localises to the cytoplasm. It carries out the reaction tRNA(Gly) + glycine + ATP = glycyl-tRNA(Gly) + AMP + diphosphate. The protein is Glycine--tRNA ligase alpha subunit (glyQ) of Haemophilus influenzae (strain ATCC 51907 / DSM 11121 / KW20 / Rd).